Here is a 294-residue protein sequence, read N- to C-terminus: Picrinine-N-methytransferase TMT2 (294 aa).

The segment at 75–84 (LLDVGCGLGG) is SAM motif I. A Vacuolar targeting signal motif is present at residues 137-143 (DGEFDVV). Residues 138–146 (GEFDVVFTL) are SAM motif II. The tract at residues 165–174 (VGSPGAAIVV) is SAM motif III.

It belongs to the class I-like SAM-binding methyltransferase superfamily. gTMT family. In terms of assembly, homodimer.

Its subcellular location is the vacuole membrane. It catalyses the reaction picrinine + S-adenosyl-L-methionine = ervincine + S-adenosyl-L-homocysteine + H(+). Its pathway is alkaloid biosynthesis; vindoline biosynthesis. S-adenosyl-L-methionine-dependent N-methyltransferase involved in the biosynthesis of biologically active monoterpenoid indole alkaloids (MIAs) natural products including vindoline. Catalyzes the conversion of picrinine to N-methylpicrinine (ervincine). The polypeptide is Picrinine-N-methytransferase TMT2 (Catharanthus roseus (Madagascar periwinkle)).